The primary structure comprises 204 residues: Ancillary SecYEG translocon subunit (204 aa).

Topologically, residues 1–23 (MAYSIEEEQEINQLKDWWKENGK) are cytoplasmic. Residues 24 to 42 (TIIVAFILGVGGMFGWRYW) traverse the membrane as a helical segment. Residues 43-204 (QTHQAEQIAQ…QMAKMKLNNL (162 aa)) lie on the Periplasmic side of the membrane.

Belongs to the YfgM family. In terms of assembly, interacts with the SecYEG translocon. Forms a complex with PpiD.

It localises to the cell inner membrane. May mediate protein transfer from the SecYEG translocon to the periplasmic chaperone network via its periplasmic C-terminal region. This chain is Ancillary SecYEG translocon subunit, found in Haemophilus influenzae (strain ATCC 51907 / DSM 11121 / KW20 / Rd).